We begin with the raw amino-acid sequence, 397 residues long: Elongation factor Tu (397 aa).

One can recognise a tr-type G domain in the interval 10–206 (KPHVNIGTIG…AVDASIPEPE (197 aa)). The segment at 19-26 (GHIDHGKT) is G1. Residue 19–26 (GHIDHGKT) coordinates GTP. Thr26 serves as a coordination point for Mg(2+). The interval 62 to 66 (GITIS) is G2. The G3 stretch occupies residues 83-86 (DCPG). GTP-binding positions include 83-87 (DCPGH) and 138-141 (NKAD). The G4 stretch occupies residues 138 to 141 (NKAD). Residues 176 to 178 (SAL) form a G5 region.

Belongs to the TRAFAC class translation factor GTPase superfamily. Classic translation factor GTPase family. EF-Tu/EF-1A subfamily. In terms of assembly, monomer.

The protein resides in the cytoplasm. It carries out the reaction GTP + H2O = GDP + phosphate + H(+). Functionally, GTP hydrolase that promotes the GTP-dependent binding of aminoacyl-tRNA to the A-site of ribosomes during protein biosynthesis. This is Elongation factor Tu from Parafrankia sp. (strain EAN1pec).